We begin with the raw amino-acid sequence, 186 residues long: Large ribosomal subunit protein uL6 (186 aa).

Belongs to the universal ribosomal protein uL6 family. As to quaternary structure, part of the 50S ribosomal subunit.

This protein binds to the 23S rRNA, and is important in its secondary structure. It is located near the subunit interface in the base of the L7/L12 stalk, and near the tRNA binding site of the peptidyltransferase center. The protein is Large ribosomal subunit protein uL6 of Ignicoccus hospitalis (strain KIN4/I / DSM 18386 / JCM 14125).